Reading from the N-terminus, the 413-residue chain is Amino acid transporter AVT3B (413 aa).

The Cytoplasmic segment spans residues 1–27 (MGLEEQGRAREDTPLLGKGRPLSSKFK). The helical transmembrane segment at 28–48 (TFANVFIAIVGAGVLGLPYAF) threads the bilayer. At 49–54 (KRTGWL) the chain is on the vacuolar side. Residues 55-75 (MGLLTLFSVAALINHCMMLLV) traverse the membrane as a helical segment. Topologically, residues 76-103 (HIRRKLGVSNIGSFGDLGFAACGNLGRF) are cytoplasmic. Residues 104-124 (VVDILIILSQAGFCVGYLIFI) traverse the membrane as a helical segment. Topologically, residues 125 to 145 (GNTLANLSKPTKSTTLMSLRH) are vacuolar. A helical transmembrane segment spans residues 146 to 166 (LMGVSPKSLYIWGCFPFQLGL). Residues 167–174 (NSIKTLTH) are Cytoplasmic-facing. Residues 175–195 (LAPLSIFADVVDLGAMAVVIV) form a helical membrane-spanning segment. Topologically, residues 196–207 (EDIKITVVQRPQ) are vacuolar. A helical transmembrane segment spans residues 208-228 (VVAFGGMSVFFYGMGVAVYAF). Residues 229 to 249 (EGVGMVLPLESETKDKDKFGK) are Cytoplasmic-facing. Residues 250–270 (VLALSMLFIAVMYGSFGVLGY) form a helical membrane-spanning segment. The Vacuolar portion of the chain corresponds to 271–288 (MAFGDDTMDIITANLGAG). A helical membrane pass occupies residues 289-309 (VVSSLVQLGLCINLFFTFPLM). The Cytoplasmic segment spans residues 310-331 (MNPVFEIVERRFWSGMYCVWLR). Residues 332–352 (WLLVLAVTLVALLVPNFADFL) form a helical membrane-spanning segment. The Vacuolar portion of the chain corresponds to 353–355 (SLV). Residues 356–376 (GSSVCCALGFVLPSLFHLMVF) form a helical membrane-spanning segment. Residues 377–390 (KDEMEWKQRALDVG) are Cytoplasmic-facing. The chain crosses the membrane as a helical span at residues 391-411 (ILLLGVILGVSGTWSSLTEIF). The Vacuolar segment spans residues 412 to 413 (QE).

It belongs to the amino acid/polyamine transporter 2 family. Amino acid/auxin permease (AAAP) (TC 2.A.18.8) subfamily. Ubiquitous.

Its subcellular location is the vacuole membrane. Translocates preferentially neutral amino acids from the vacuole to the cytoplasm. The chain is Amino acid transporter AVT3B from Arabidopsis thaliana (Mouse-ear cress).